The following is a 291-amino-acid chain: Meteorin (291 aa).

Positions 1-21 are cleaved as a signal peptide; sequence MLVAALLCALCCGLLAASARA. 5 disulfides stabilise this stretch: cysteine 28–cysteine 49, cysteine 80–cysteine 116, cysteine 169–cysteine 240, cysteine 172–cysteine 264, and cysteine 182–cysteine 286.

The protein belongs to the meteorin family. In terms of assembly, monomer.

It is found in the secreted. In terms of biological role, involved in both glial cell differentiation and axonal network formation during neurogenesis. Promotes astrocyte differentiation and transforms cerebellar astrocytes into radial glia. Also induces axonal extension in small and intermediate neurons of sensory ganglia by activating nearby satellite glia. This is Meteorin (Metrn) from Rattus norvegicus (Rat).